A 294-amino-acid polypeptide reads, in one-letter code: UPF0761 membrane protein YPK_4186 (294 aa).

7 consecutive transmembrane segments (helical) span residues 44–64 (LLSL…FPMF), 67–87 (ISIK…GDII), 108–128 (GLIV…NIIW), 136–156 (LVFS…LVGA), 185–205 (VFPL…VPTV), 212–232 (ALIG…GFAM), and 246–266 (VLAV…IVLL).

This sequence belongs to the UPF0761 family.

The protein localises to the cell inner membrane. This Yersinia pseudotuberculosis serotype O:3 (strain YPIII) protein is UPF0761 membrane protein YPK_4186.